A 516-amino-acid polypeptide reads, in one-letter code: Replication factor C large subunit (516 aa).

44–51 provides a ligand contact to ATP; it reads GAPGVGKT. Positions 421-516 are disordered; that stretch reads RSEAVEAHAG…DGQAGLSEFM (96 aa). Residues 454-467 are compositionally biased toward basic and acidic residues; sequence VQSHKSAESGDDTV. Positions 479-496 are enriched in low complexity; it reads QSGASETASATESASDSD. Acidic residues predominate over residues 497–508; that stretch reads ASTDTDADDDDG.

The protein belongs to the activator 1 small subunits family. RfcL subfamily. Heteromultimer composed of small subunits (RfcS) and large subunits (RfcL).

Part of the RFC clamp loader complex which loads the PCNA sliding clamp onto DNA. In Haloquadratum walsbyi (strain DSM 16790 / HBSQ001), this protein is Replication factor C large subunit.